The following is a 216-amino-acid chain: Pathogenicity-related ORF2 (216 aa).

The next 4 membrane-spanning stretches (helical) occupy residues 6–26, 55–75, 157–177, and 193–213; these read VGSL…AAMV, LNGV…MEAF, IGFL…NALM, and FKLL…GLVL.

It belongs to the FliP/MopC/SpaP family.

It localises to the cell membrane. Functionally, important for pathogenicity. The chain is Pathogenicity-related ORF2 from Xanthomonas campestris pv. glycines.